A 514-amino-acid polypeptide reads, in one-letter code: Protein farnesyltransferase subunit beta (514 aa).

The span at 1 to 13 (MRHHTKNLRRRAI) shows a compositional bias: basic residues. The tract at residues 1–56 (MRHHTKNLRRRAIFLRTTPRGNMDSSSSVATSTSSSSNHRLVRSSEGSPSAGGDDI) is disordered. Positions 25 to 39 (SSSSVATSTSSSSNH) are enriched in low complexity. 5 PFTB repeats span residues 180–221 (AESL…AVVG), 231–272 (RRAL…SLLN), 293–334 (FTGL…SLLG), 346–388 (IERL…PLIE), and 410–454 (REGL…SSAQ). Residues 319-322 (HGAY) and 367-370 (RTNK) contribute to the (2E,6E)-farnesyl diphosphate site. Zn(2+)-binding residues include aspartate 373 and cysteine 375. 376–379 (YSHW) lines the (2E,6E)-farnesyl diphosphate pocket. Residue histidine 442 coordinates Zn(2+).

Belongs to the protein prenyltransferase subunit beta family. As to quaternary structure, heterodimer of an alpha and a beta subunit. Interacts with RAS1 and RAS2. Zn(2+) serves as cofactor. In terms of tissue distribution, highly expressed in mycelium, conidium, conidial germination, early formed appressorium and the late infection hypha.

The protein resides in the cytoplasm. The enzyme catalyses L-cysteinyl-[protein] + (2E,6E)-farnesyl diphosphate = S-(2E,6E)-farnesyl-L-cysteinyl-[protein] + diphosphate. In terms of biological role, catalyzes the transfer of a farnesyl moiety from farnesyl diphosphate to a cysteine at the fourth position from the C-terminus of several proteins having the C-terminal sequence Cys-aliphatic-aliphatic-X. The beta subunit is responsible for peptide-binding. The polypeptide is Protein farnesyltransferase subunit beta (RAM1) (Pyricularia oryzae (strain 70-15 / ATCC MYA-4617 / FGSC 8958) (Rice blast fungus)).